Reading from the N-terminus, the 122-residue chain is Replication termination protein (122 aa).

In terms of assembly, homodimer.

Its function is as follows. Plays a role in DNA replication and termination (fork arrest mechanism). Two dimers of rtp bind to the two inverted repeat regions (IRI and IRII) present in the termination site. The binding of each dimer is centered on an 8 bp direct repeat. The protein is Replication termination protein (rtp) of Bacillus spizizenii (strain ATCC 23059 / NRRL B-14472 / W23) (Bacillus subtilis subsp. spizizenii).